Reading from the N-terminus, the 94-residue chain is Integration host factor subunit beta (94 aa).

It belongs to the bacterial histone-like protein family. Heterodimer of an alpha and a beta chain.

Its function is as follows. This protein is one of the two subunits of integration host factor, a specific DNA-binding protein that functions in genetic recombination as well as in transcriptional and translational control. This is Integration host factor subunit beta from Nitrosospira multiformis (strain ATCC 25196 / NCIMB 11849 / C 71).